A 441-amino-acid chain; its full sequence is Ribosomal protein uS12 methylthiotransferase RimO (441 aa).

Residues 7–117 form the MTTase N-terminal domain; it reads PKISFVSLGC…VLDAVHRAKP (111 aa). Residues Cys16, Cys52, Cys81, Cys148, Cys152, and Cys155 each coordinate [4Fe-4S] cluster. Positions 134–371 constitute a Radical SAM core domain; it reads LTPRHYAYLK…MARQQAISAR (238 aa). The TRAM domain occupies 374 to 440; it reads KRKVGTRQQI…AYDLHGTVAG (67 aa).

The protein belongs to the methylthiotransferase family. RimO subfamily. [4Fe-4S] cluster serves as cofactor.

It localises to the cytoplasm. It carries out the reaction L-aspartate(89)-[ribosomal protein uS12]-hydrogen + (sulfur carrier)-SH + AH2 + 2 S-adenosyl-L-methionine = 3-methylsulfanyl-L-aspartate(89)-[ribosomal protein uS12]-hydrogen + (sulfur carrier)-H + 5'-deoxyadenosine + L-methionine + A + S-adenosyl-L-homocysteine + 2 H(+). Its function is as follows. Catalyzes the methylthiolation of an aspartic acid residue of ribosomal protein uS12. The polypeptide is Ribosomal protein uS12 methylthiotransferase RimO (Rhodopseudomonas palustris (strain HaA2)).